A 297-amino-acid chain; its full sequence is Mitochondrial nicotinamide adenine dinucleotide transporter SLC25A51 (297 aa).

Positions Met-1–Pro-11 are enriched in basic and acidic residues. Residues Met-1 to Asp-20 form a disordered region. Solcar repeat units follow at residues Val-28–Leu-108, Pro-116–His-200, and Asn-213–Val-296. 6 helical membrane passes run Cys-36–Phe-56, Leu-85–Leu-105, Pro-116–Phe-135, Ile-179–Glu-199, Phe-215–Val-235, and Leu-268–Thr-289.

The protein belongs to the mitochondrial carrier (TC 2.A.29) family.

Its subcellular location is the mitochondrion inner membrane. It carries out the reaction NAD(+)(in) = NAD(+)(out). Functionally, mitochondrial membrane carrier protein that mediates the import of NAD(+) into mitochondria. Mitochondrial NAD(+) is required for glycolysis and mitochondrial respiration. Compared to SLC25A52, SLC25A51-mediated transport is essential for the import of NAD(+) in mitochondria. The transport mechanism, uniport or antiport, its electrogenicity and substrate selectivity, remain to be elucidated. This chain is Mitochondrial nicotinamide adenine dinucleotide transporter SLC25A51, found in Homo sapiens (Human).